The following is a 274-amino-acid chain: NADPH-dependent 7-cyano-7-deazaguanine reductase (274 aa).

Substrate is bound at residue 80–82 (VES). 82 to 83 (SK) lines the NADPH pocket. Catalysis depends on C181, which acts as the Thioimide intermediate. Residue D188 is the Proton donor of the active site. 220-221 (HE) is a binding site for substrate. Residue 249 to 250 (RG) participates in NADPH binding.

It belongs to the GTP cyclohydrolase I family. QueF type 2 subfamily. Homodimer.

It localises to the cytoplasm. The enzyme catalyses 7-aminomethyl-7-carbaguanine + 2 NADP(+) = 7-cyano-7-deazaguanine + 2 NADPH + 3 H(+). Its pathway is tRNA modification; tRNA-queuosine biosynthesis. Its function is as follows. Catalyzes the NADPH-dependent reduction of 7-cyano-7-deazaguanine (preQ0) to 7-aminomethyl-7-deazaguanine (preQ1). The protein is NADPH-dependent 7-cyano-7-deazaguanine reductase of Burkholderia vietnamiensis (strain G4 / LMG 22486) (Burkholderia cepacia (strain R1808)).